The primary structure comprises 49 residues: Large ribosomal subunit protein bL33A (49 aa).

Belongs to the bacterial ribosomal protein bL33 family.

This chain is Large ribosomal subunit protein bL33A (rpmG1), found in Enterococcus faecalis (strain ATCC 700802 / V583).